The primary structure comprises 65 residues: Protein translocase subunit SecE (65 aa).

Residues 1–27 are Cytoplasmic-facing; the sequence is MEKLKEFLKGVRDELKRVVWPSRELVV. Residues 28 to 59 traverse the membrane as a helical segment; the sequence is KATISVIIFSLAIGVYLWILDLTFTKIISFIL. Topologically, residues 60 to 65 are periplasmic; it reads SLRGSL.

This sequence belongs to the SecE/SEC61-gamma family. As to quaternary structure, component of the Sec protein translocase complex. Heterotrimer consisting of SecY, SecE and SecG subunits. The heterotrimers can form oligomers, although 1 heterotrimer is thought to be able to translocate proteins. Interacts with SecDF, and other proteins may be involved. The channel interacts with SecA via subunit SecY.

The protein resides in the cell inner membrane. Its function is as follows. Essential subunit of the protein translocation channel SecYEG. Clamps together the 2 halves of SecY. May contact the channel plug during translocation. The sequence is that of Protein translocase subunit SecE from Aquifex aeolicus (strain VF5).